A 245-amino-acid polypeptide reads, in one-letter code: Ribonuclease PH (245 aa).

Residues R86 and 124–126 (GTR) contribute to the phosphate site.

The protein belongs to the RNase PH family. As to quaternary structure, homohexameric ring arranged as a trimer of dimers.

The enzyme catalyses tRNA(n+1) + phosphate = tRNA(n) + a ribonucleoside 5'-diphosphate. Phosphorolytic 3'-5' exoribonuclease that plays an important role in tRNA 3'-end maturation. Removes nucleotide residues following the 3'-CCA terminus of tRNAs; can also add nucleotides to the ends of RNA molecules by using nucleoside diphosphates as substrates, but this may not be physiologically important. Probably plays a role in initiation of 16S rRNA degradation (leading to ribosome degradation) during starvation. This Bacillus cereus (strain G9842) protein is Ribonuclease PH.